A 488-amino-acid chain; its full sequence is Probable glycine dehydrogenase (decarboxylating) subunit 2 (488 aa).

At Lys274 the chain carries N6-(pyridoxal phosphate)lysine.

Belongs to the GcvP family. C-terminal subunit subfamily. As to quaternary structure, the glycine cleavage system is composed of four proteins: P, T, L and H. In this organism, the P 'protein' is a heterodimer of two subunits. Requires pyridoxal 5'-phosphate as cofactor.

The catalysed reaction is N(6)-[(R)-lipoyl]-L-lysyl-[glycine-cleavage complex H protein] + glycine + H(+) = N(6)-[(R)-S(8)-aminomethyldihydrolipoyl]-L-lysyl-[glycine-cleavage complex H protein] + CO2. Its function is as follows. The glycine cleavage system catalyzes the degradation of glycine. The P protein binds the alpha-amino group of glycine through its pyridoxal phosphate cofactor; CO(2) is released and the remaining methylamine moiety is then transferred to the lipoamide cofactor of the H protein. The polypeptide is Probable glycine dehydrogenase (decarboxylating) subunit 2 (Listeria welshimeri serovar 6b (strain ATCC 35897 / DSM 20650 / CCUG 15529 / CIP 8149 / NCTC 11857 / SLCC 5334 / V8)).